A 533-amino-acid chain; its full sequence is MAFANLRKVLISDSLDPCCREILQDGGLQVVEKQNLSKEELIAELQDCEGLIVRSATKVTSDVINAAKKLQVVGRAGTGVDNVDLEAATRKGILVMNTPNGNSLSAAELTCGMILCLARQIPQATASMKDGKWERKKFMGTELNGKVLGILGLGRIGREVATRMQSFGMKTIGYDPIIAPEVSASFGVQQLPLEEIWPLCDFITVHTPLLPSTTGLLNDSTFALCKKGVRVVNCARGGIVDEGALLRALQSGQCAGAALDVFTEEPPRDRALVDHEKVISCPHLGASTREAQSRCGEEIAIQFVDMVKGRSLAGVVNAQALTSAFSPHTKPWIGLAEALGALMQAWAGSPKGTIQVVTQGTSLKNSGTCLSPAVIVGLLKEASHRADVNLVNAKLLEKEAGLHVTTSHNPAAPEEQGGAECFLTVALAGAPYQAVGLVQGTAPMLHALNGAVFRPEVPLRRGLPLLLFRAQPSNPTMLPTMIGLLAEARVQLLSYQTSVVSDGETWHVMAISSLLPSLEPWKQHVTEAFQFHF.

Ala2 is subject to N-acetylalanine. Ser14 is modified (phosphoserine). N6-acetyllysine is present on Lys58. Residues Thr78, 155-156 (RI), Asp175, Thr207, 234-236 (CAR), and Asp260 each bind NAD(+). The residue at position 78 (Thr78) is a Phosphothreonine. The active site involves Arg236. The active site involves Glu265. His283 (proton donor) is an active-site residue. NAD(+) is bound at residue 283–286 (HLGA).

This sequence belongs to the D-isomer specific 2-hydroxyacid dehydrogenase family. Homotetramer.

It catalyses the reaction (2R)-3-phosphoglycerate + NAD(+) = 3-phosphooxypyruvate + NADH + H(+). The catalysed reaction is (R)-2-hydroxyglutarate + NAD(+) = 2-oxoglutarate + NADH + H(+). The enzyme catalyses (S)-malate + NAD(+) = oxaloacetate + NADH + H(+). It participates in amino-acid biosynthesis; L-serine biosynthesis; L-serine from 3-phospho-D-glycerate: step 1/3. Catalyzes the reversible oxidation of 3-phospho-D-glycerate to 3-phosphonooxypyruvate, the first step of the phosphorylated L-serine biosynthesis pathway. Also catalyzes the reversible oxidation of 2-hydroxyglutarate to 2-oxoglutarate and the reversible oxidation of (S)-malate to oxaloacetate. This chain is D-3-phosphoglycerate dehydrogenase (PHGDH), found in Sus scrofa (Pig).